A 375-amino-acid polypeptide reads, in one-letter code: Putative serine protease 47 (375 aa).

Residues 1 to 23 (MGYCQGVSQVAVVLLMFPKEKEA) form the signal peptide. Positions 41 to 60 (DGQLPMGPHSRASQVAPETT) are disordered. The span at 51–60 (RASQVAPETT) shows a compositional bias: polar residues. Residues 81–323 (IYGGRDAAAG…FINWIDEIMR (243 aa)) enclose the Peptidase S1 domain. A disulfide bond links Cys-106 and Cys-122. Residues His-121 and Asp-172 each act as charge relay system in the active site. Residues Asn-183 and Asn-203 are each glycosylated (N-linked (GlcNAc...) asparagine). A disulfide bridge links Cys-206 with Cys-281. Ser-275 functions as the Charge relay system in the catalytic mechanism.

The protein belongs to the peptidase S1 family.

It is found in the secreted. This chain is Putative serine protease 47 (PRSS47P), found in Homo sapiens (Human).